Consider the following 501-residue polypeptide: Vitamin D 25-hydroxylase (501 aa).

Ala250 contributes to the substrate binding site. Cys448 lines the heme pocket.

This sequence belongs to the cytochrome P450 family. Homodimer. Heme is required as a cofactor. Highly expressed in the liver and testis.

It localises to the endoplasmic reticulum membrane. It is found in the microsome membrane. It catalyses the reaction calciol + reduced [NADPH--hemoprotein reductase] + O2 = calcidiol + oxidized [NADPH--hemoprotein reductase] + H2O + H(+). The enzyme catalyses vitamin D2 + reduced [NADPH--hemoprotein reductase] + O2 = 25-hydroxyvitamin D2 + oxidized [NADPH--hemoprotein reductase] + H2O + H(+). The catalysed reaction is 1alpha-hydroxyvitamin D2 + reduced [NADPH--hemoprotein reductase] + O2 = 1alpha,25-dihydroxyvitamin D2 + oxidized [NADPH--hemoprotein reductase] + H2O + H(+). It carries out the reaction alfacalcidol + reduced [NADPH--hemoprotein reductase] + O2 = calcitriol + oxidized [NADPH--hemoprotein reductase] + H2O + H(+). It functions in the pathway hormone biosynthesis; vitamin D biosynthesis. Functionally, a cytochrome P450 monooxygenase involved in activation of vitamin D precursors. Catalyzes hydroxylation at C-25 of both forms of vitamin D, vitamin D(2) and D(3) (calciol). Can metabolize vitamin D analogs/prodrugs 1alpha-hydroxyvitamin D(2) (doxercalciferol) and 1alpha-hydroxyvitamin D(3) (alfacalcidol) forming 25-hydroxy derivatives. Mechanistically, uses molecular oxygen inserting one oxygen atom into a substrate, and reducing the second into a water molecule, with two electrons provided by NADPH via cytochrome P450 reductase (CPR; NADPH-ferrihemoprotein reductase). In Mus musculus (Mouse), this protein is Vitamin D 25-hydroxylase (Cyp2r1).